The sequence spans 91 residues: Uteroglobin (91 aa).

The N-terminal stretch at M1–A21 is a signal peptide.

This sequence belongs to the secretoglobin family. In terms of assembly, antiparallel homodimer; disulfide-linked. Interaction with LMBR1L is controversial. In terms of tissue distribution, synthesized in the uterus and lung.

The protein localises to the secreted. In terms of biological role, uteroglobin binds progesterone specifically and with high affinity. It may regulate progesterone concentrations reaching the blastocyst. It is also a potent inhibitor of phospholipase A2. The protein is Uteroglobin (SCGB1A1) of Oryctolagus cuniculus (Rabbit).